The sequence spans 240 residues: Ubiquinone biosynthesis O-methyltransferase (240 aa).

S-adenosyl-L-methionine contacts are provided by arginine 44, glycine 64, aspartate 85, and methionine 129.

Belongs to the methyltransferase superfamily. UbiG/COQ3 family.

The catalysed reaction is a 3-demethylubiquinol + S-adenosyl-L-methionine = a ubiquinol + S-adenosyl-L-homocysteine + H(+). The enzyme catalyses a 3-(all-trans-polyprenyl)benzene-1,2-diol + S-adenosyl-L-methionine = a 2-methoxy-6-(all-trans-polyprenyl)phenol + S-adenosyl-L-homocysteine + H(+). It participates in cofactor biosynthesis; ubiquinone biosynthesis. O-methyltransferase that catalyzes the 2 O-methylation steps in the ubiquinone biosynthetic pathway. The chain is Ubiquinone biosynthesis O-methyltransferase from Escherichia coli (strain SMS-3-5 / SECEC).